The following is a 316-amino-acid chain: tRNA dimethylallyltransferase (316 aa).

17–24 (GPTASGKT) is an ATP binding site. 19–24 (TASGKT) contacts substrate. Interaction with substrate tRNA stretches follow at residues 42-45 (DSAL), 166-170 (QRLSR), and 247-252 (RCVGYR).

This sequence belongs to the IPP transferase family. As to quaternary structure, monomer. Mg(2+) is required as a cofactor.

It catalyses the reaction adenosine(37) in tRNA + dimethylallyl diphosphate = N(6)-dimethylallyladenosine(37) in tRNA + diphosphate. In terms of biological role, catalyzes the transfer of a dimethylallyl group onto the adenine at position 37 in tRNAs that read codons beginning with uridine, leading to the formation of N6-(dimethylallyl)adenosine (i(6)A). The protein is tRNA dimethylallyltransferase of Salmonella paratyphi C (strain RKS4594).